A 167-amino-acid chain; its full sequence is Endoribonuclease YbeY (167 aa).

Residues H132, H136, and H142 each coordinate Zn(2+).

This sequence belongs to the endoribonuclease YbeY family. The cofactor is Zn(2+).

It is found in the cytoplasm. Functionally, single strand-specific metallo-endoribonuclease involved in late-stage 70S ribosome quality control and in maturation of the 3' terminus of the 16S rRNA. The polypeptide is Endoribonuclease YbeY (Clostridium beijerinckii (strain ATCC 51743 / NCIMB 8052) (Clostridium acetobutylicum)).